The following is a 255-amino-acid chain: MNILLSNDDGVHSPGLLALKCQLEQLGCVTVVAPERNWSAGSHSRTLFAPLRVNEVQLADGSPALACDGSPADCVGLALLGVMDHRPDLVVSGINLGANLGHDVLYSGTVAAAMEGLVVGIRSIAVSLVDGYKPGSDFSVAADWARRIAATAMELQLPSDILLNVNVPQGSAEIVNDAKVTRLGHRIYRDELIKRLDPRGRPYYWVGGAAPDGKPDDGTDFGAVANNHVSITPLHFDMTNLDWVQRLSTAIWNNA.

Residues D8, D9, S39, and N95 each contribute to the a divalent metal cation site.

The protein belongs to the SurE nucleotidase family. A divalent metal cation serves as cofactor.

Its subcellular location is the cytoplasm. The enzyme catalyses a ribonucleoside 5'-phosphate + H2O = a ribonucleoside + phosphate. In terms of biological role, nucleotidase that shows phosphatase activity on nucleoside 5'-monophosphates. In Herpetosiphon aurantiacus (strain ATCC 23779 / DSM 785 / 114-95), this protein is 5'-nucleotidase SurE.